A 366-amino-acid polypeptide reads, in one-letter code: sn-glycerol-3-phosphate import ATP-binding protein UgpC (366 aa).

The ABC transporter domain occupies 4 to 235 (VTLRNVRKTY…PASTFVASFI (232 aa)). 37-44 (GPSGCGKS) is a binding site for ATP.

Belongs to the ABC transporter superfamily. sn-glycerol-3-phosphate importer (TC 3.A.1.1.3) family. The complex is composed of two ATP-binding proteins (UgpC), two transmembrane proteins (UgpA and UgpE) and a solute-binding protein (UgpB).

The protein resides in the cell inner membrane. It catalyses the reaction sn-glycerol 3-phosphate(out) + ATP + H2O = sn-glycerol 3-phosphate(in) + ADP + phosphate + H(+). Part of the ABC transporter complex UgpBAEC involved in sn-glycerol-3-phosphate (G3P) import. Responsible for energy coupling to the transport system. In Rhodopseudomonas palustris (strain BisB18), this protein is sn-glycerol-3-phosphate import ATP-binding protein UgpC.